The chain runs to 83 residues: Small ribosomal subunit protein bS20 (83 aa).

The protein belongs to the bacterial ribosomal protein bS20 family.

In terms of biological role, binds directly to 16S ribosomal RNA. This is Small ribosomal subunit protein bS20 from Staphylococcus haemolyticus (strain JCSC1435).